A 212-amino-acid chain; its full sequence is Ribosomal RNA small subunit methyltransferase G (212 aa).

S-adenosyl-L-methionine contacts are provided by residues Gly-80, Leu-85, 131 to 132 (AE), and Arg-146.

It belongs to the methyltransferase superfamily. RNA methyltransferase RsmG family.

Its subcellular location is the cytoplasm. It carries out the reaction guanosine(527) in 16S rRNA + S-adenosyl-L-methionine = N(7)-methylguanosine(527) in 16S rRNA + S-adenosyl-L-homocysteine. Specifically methylates the N7 position of guanine in position 527 of 16S rRNA. This chain is Ribosomal RNA small subunit methyltransferase G, found in Xanthomonas oryzae pv. oryzae (strain MAFF 311018).